Consider the following 738-residue polypeptide: Phosphoribosylformylglycinamidine synthase subunit PurL (738 aa).

The active site involves His-53. The ATP site is built by Tyr-56 and Lys-95. Residue Glu-97 coordinates Mg(2+). Residues 98–101 and Arg-120 each bind substrate; that span reads SHNH. The Proton acceptor role is filled by His-99. Position 121 (Asp-121) interacts with Mg(2+). Gln-244 is a substrate binding site. Residue Asp-274 coordinates Mg(2+). 318-320 contributes to the substrate binding site; that stretch reads ESQ. ATP contacts are provided by Asp-499 and Gly-536. Residue Asn-537 participates in Mg(2+) binding. Substrate is bound at residue Ser-539.

The protein belongs to the FGAMS family. Monomer. Part of the FGAM synthase complex composed of 1 PurL, 1 PurQ and 2 PurS subunits.

It is found in the cytoplasm. It carries out the reaction N(2)-formyl-N(1)-(5-phospho-beta-D-ribosyl)glycinamide + L-glutamine + ATP + H2O = 2-formamido-N(1)-(5-O-phospho-beta-D-ribosyl)acetamidine + L-glutamate + ADP + phosphate + H(+). It participates in purine metabolism; IMP biosynthesis via de novo pathway; 5-amino-1-(5-phospho-D-ribosyl)imidazole from N(2)-formyl-N(1)-(5-phospho-D-ribosyl)glycinamide: step 1/2. Its function is as follows. Part of the phosphoribosylformylglycinamidine synthase complex involved in the purines biosynthetic pathway. Catalyzes the ATP-dependent conversion of formylglycinamide ribonucleotide (FGAR) and glutamine to yield formylglycinamidine ribonucleotide (FGAM) and glutamate. The FGAM synthase complex is composed of three subunits. PurQ produces an ammonia molecule by converting glutamine to glutamate. PurL transfers the ammonia molecule to FGAR to form FGAM in an ATP-dependent manner. PurS interacts with PurQ and PurL and is thought to assist in the transfer of the ammonia molecule from PurQ to PurL. The protein is Phosphoribosylformylglycinamidine synthase subunit PurL of Lacticaseibacillus paracasei (strain ATCC 334 / BCRC 17002 / CCUG 31169 / CIP 107868 / KCTC 3260 / NRRL B-441) (Lactobacillus paracasei).